The following is a 585-amino-acid chain: Involucrin (585 aa).

Polar residues predominate over residues M1–L15. Positions M1 to Q132 are disordered. Q79 carries Omega-hydroxyceramide glutamate ester lipidation. Basic and acidic residues predominate over residues W92–R115. 2 omega-hydroxyceramide glutamate ester lipidation sites follow: Q118 and Q133. The segment at K149–L540 is disordered. 23 tandem repeats follow at residues L153–H162, L163–Q172, L173–Q182, L183–Q192, L193–Q202, L203–Q212, L213–Q222, L223–Q232, L233–Q242, L243–Q252, L253–Q262, L263–Q272, L273–Q282, L283–Q292, L293–Q302, P303–Q312, L313–Q322, P323–Q332, L333–Q342, L343–Q352, L353–Q362, L363–Q372, and L373–Q382. Residues L153 to Q542 form a 39 X 10 AA approximate tandem repeats of [LP]-[EKG]-[LHVYQEK]-[PLSQE]-[EQDV]-[QHEKRGA]-Q-[EMVQLP]-[GKLE]-[QHVNLD] region. A compositionally biased stretch (basic and acidic residues) spans Q159–Q178. Low complexity predominate over residues Q179–G261. A compositionally biased stretch (basic and acidic residues) spans Q262 to G271. Composition is skewed to basic and acidic residues over residues Q292–E304, K314–Q328, and G341–E360. The segment covering G361–P383 has biased composition (low complexity). Residues P383–Q392 form a 24; approximate repeat. Basic and acidic residues predominate over residues K384–L393. 11 consecutive repeat copies span residues L393–Q402, L403–Q412, L413–H422, L423–H432, L433–H442, L443–V452, P453–N462, L463–L472, P473–H482, L483–L492, and P493–H502. Basic and acidic residues-rich tracts occupy residues Q415–E424 and K431–E444. Over residues Q445–N462 the composition is skewed to low complexity. Over residues Q479–A488 the composition is skewed to basic and acidic residues. An Isoglutamyl lysine isopeptide (Gln-Lys) (interchain with K-? in other proteins) cross-link involves residue Q496. Residues K501–Q535 show a composition bias toward basic and acidic residues. Residues L503–H512 form a 36; approximate repeat. 2 repeat units span residues P513–H522 and L523–D532. The 39; approximate repeat unit spans residues L533–Q542.

This sequence belongs to the involucrin family. In terms of assembly, directly or indirectly cross-linked to cornifelin (CNFN). In terms of processing, substrate of transglutaminase. Some glutamines and lysines are cross-linked to other involucrin molecules, to other proteins such as keratin, desmoplakin, periplakin and envoplakin, and to lipids like omega-hydroxyceramide. Keratinocytes of epidermis and other stratified squamous epithelia.

It localises to the cytoplasm. Part of the insoluble cornified cell envelope (CE) of stratified squamous epithelia. The sequence is that of Involucrin (IVL) from Homo sapiens (Human).